Reading from the N-terminus, the 514-residue chain is MDSKPLEYLLGLNSDGSVKKVSEVFENLTVTNTVCAFIALFIIVPRVFDFLRNLFSPVISIPGPLINKFSPWPLEIATFKGKSHRFARALHRKYGPIVVLAPGMISIGDSQEIKRIIQSEDWAKSEAIYGNFRQDFHRPTLLAFTEKKAYSRRKRMLSSMFGIRYIRSLEPLMKSCVDAGVAHLNKLCDNPSKSTVINLQHFIHGLAIDTIGVTTFGGSFHVVENGSHPLPSRLKAGMKISAVMQLIGWIKYIPFLPKRDPYIEKFTFDIVDKRRKEAGAVKYQDLLQHLVDVCDDSPGSEFRTSDVQDESVILLAAGSETTANAELFTVIQLLKHPEVMKKLIAEVDKWYPPSEPDRVTECAYSQTGMTYLQACIDETMRLIPGQATGSPRETSKQESLLGYKIPRGTTVFPNTQEAHLDGSIWEQPEKYIPERWLEIYSQNQTSAMPYWPFSAGSRICVGKNFAFQEMHISLTTLLRKFTFEYVPGQDETTVFRIAQQLETDSYKVRVKKRF.

The chain crosses the membrane as a helical span at residues V24 to V44. 2 N-linked (GlcNAc...) asparagine glycosylation sites follow: N225 and N443. Residue C460 participates in heme binding.

The protein belongs to the cytochrome P450 family. Heme is required as a cofactor.

Its subcellular location is the membrane. The protein operates within mycotoxin biosynthesis. Its function is as follows. Cytochrome P450 monooxygenase; part of the gene cluster that mediates the biosynthesis of the mycotoxin fusarin C. Within the cluster, FUS1, FUS2, FUS8 and FUS9 are sufficient for fusarin production. The roles of the other FUS members are yet undetermined. The fusarin C synthetase FUS1 is responsible for the condensation of one acetyl-coenzyme A (CoA) unit with six malonyl-CoA units and the amide linkage of the arising heptaketide and homoserine, subsequently releasing the first intermediate, prefusarin, as an alcohol with an open ring structure. The cytochrome P450 monooxygenase FUS8 participates in multiple oxidation processes at carbon C-20 and is able to use the FUS1 product as substrate, resulting in formation of 20-hydroxy-prefusarin. This reaction seems to be essential before the 2-pyrrolidone ring closure can be catalyzed by FUS2, generating 20-hydroxy-fusarin. FUS8 is able to further oxidizes carbon C-20 after ring closure, resulting in the formation of carboxy-fusarin C. As the last step, FUS9 methylates the hydroxyl group at C-21 to generate fusarin C. Fusarin C can then rearrange to epi-fusarin C, the (z)-isomers, and fusarin A and fusarin D. This is Cytochrome P450 monooxygenase FUS8 from Gibberella fujikuroi (strain CBS 195.34 / IMI 58289 / NRRL A-6831) (Bakanae and foot rot disease fungus).